We begin with the raw amino-acid sequence, 544 residues long: MAKDIKFSEEARRSMLRGVDTLANAVKVTLGPKGRNVVLEKKFGSPLITNDGVTIAKEIELEDAFENMGAKLVAEVASKTNDVAGDGTTTATVLAQAMIREGLKNVTAGANPMGLRKGIEKAVVAAVEELKTISKPIEGKSSIAQVAAISAADEEVGQLIAEAMERVGNDGVITLEESKGFTTELDVVEGMQFDRGYASPYMITDSDKMEAVLDNPYILITDKKISNIQEILPVLEQVVQQGKPLLIIAEDVEGEALATLVVNKLRGTFNVVAVKAPGFGDRRKAMLEDIAILTGGEVITEELGRDLKSATVESLGRAGKVVVTKENTTVVEGVGSTEQIEARIGQIRAQLEETTSEFDREKLQERLAKLAGGVAVIKVGAATETELKERKLRIEDALNSTRAAVEEGIVAGGGTSLMNVYTKVASIVAEGDEATGINIVLRALEEPVRQIAINAGLEGSVVVERLKGEKVGVGFNAATGEWVNMLETGIVDPAKVTRSALQNAASVAAMFLTTEAVVADKPEPNAPAMPDMGGMGMGGMGGMM.

Residues 29–32 (TLGP), 86–90 (DGTTT), Gly-413, 476–478 (NAA), and Asp-492 contribute to the ATP site.

The protein belongs to the chaperonin (HSP60) family. As to quaternary structure, forms a cylinder of 14 subunits composed of two heptameric rings stacked back-to-back. Interacts with the co-chaperonin GroES.

It localises to the cytoplasm. It carries out the reaction ATP + H2O + a folded polypeptide = ADP + phosphate + an unfolded polypeptide.. In terms of biological role, together with its co-chaperonin GroES, plays an essential role in assisting protein folding. The GroEL-GroES system forms a nano-cage that allows encapsulation of the non-native substrate proteins and provides a physical environment optimized to promote and accelerate protein folding. This chain is Chaperonin GroEL, found in Bacillus thuringiensis (strain Al Hakam).